Here is an 82-residue protein sequence, read N- to C-terminus: Putative membrane protein insertion efficiency factor (82 aa).

Residues 61–82 form a disordered region; the sequence is HEGGYDPVPKRKNKNSEGKREE.

It belongs to the UPF0161 family.

The protein localises to the cell inner membrane. Could be involved in insertion of integral membrane proteins into the membrane. The polypeptide is Putative membrane protein insertion efficiency factor (Fusobacterium nucleatum subsp. nucleatum (strain ATCC 25586 / DSM 15643 / BCRC 10681 / CIP 101130 / JCM 8532 / KCTC 2640 / LMG 13131 / VPI 4355)).